We begin with the raw amino-acid sequence, 794 residues long: Zinc finger protein 148 (794 aa).

Residue Lys-6 forms a Glycyl lysine isopeptide (Lys-Gly) (interchain with G-Cter in SUMO2) linkage. Position 51 is a phosphoserine (Ser-51). Residues Lys-88, Lys-115, and Lys-132 each participate in a glycyl lysine isopeptide (Lys-Gly) (interchain with G-Cter in SUMO2) cross-link. A C2H2-type 1 zinc finger spans residues 171–193 (HVCEHCNAAFRTNYHLQRHVFIH). Thr-194 carries the post-translational modification Phosphothreonine. 2 consecutive C2H2-type zinc fingers follow at residues 199 to 221 (FQCS…EKIH) and 227 to 249 (FRCD…KRTH). Ser-250 is modified (phosphoserine). A C2H2-type 4 zinc finger spans residues 255–278 (YQCEYCLQYFSRTDRVLKHKRMCH). Lys-291 participates in a covalent cross-link: Glycyl lysine isopeptide (Lys-Gly) (interchain with G-Cter in SUMO2). Residues 298–338 (EEDSGFSTSPKDNSLPKKKRQKTEKKSSGMDKESSLDKSDL) form a disordered region. 2 positions are modified to phosphoserine: Ser-301 and Ser-306. Residue Lys-308 forms a Glycyl lysine isopeptide (Lys-Gly) (interchain with G-Cter in SUMO2) linkage. Residues 321–338 (EKKSSGMDKESSLDKSDL) show a composition bias toward basic and acidic residues. A Glycyl lysine isopeptide (Lys-Gly) (interchain with G-Cter in SUMO1); alternate cross-link involves residue Lys-356. A Glycyl lysine isopeptide (Lys-Gly) (interchain with G-Cter in SUMO2); alternate cross-link involves residue Lys-356. Residue Lys-402 forms a Glycyl lysine isopeptide (Lys-Gly) (interchain with G-Cter in SUMO2) linkage. Ser-412 is modified (phosphoserine). Residues Lys-421 and Lys-424 each participate in a glycyl lysine isopeptide (Lys-Gly) (interchain with G-Cter in SUMO2) cross-link. Positions 575–588 (SSEVPEVTQSENVG) are enriched in polar residues. A disordered region spans residues 575–596 (SSEVPEVTQSENVGSSSQASSS). N6-acetyllysine is present on Lys-607. Ser-665 and Ser-784 each carry phosphoserine. Residues 775 to 794 (NDNRAGMTSSPDATTGQTFG) form a disordered region.

Belongs to the krueppel C2H2-type zinc-finger protein family. As to quaternary structure, interacts with HNRNPDL. Interacts with the 5FMC complex; the interaction requires association with CHTOP. Interacts with CAVIN1. Sumoylated with SUMO2. Desumoylated by SENP3, resulting in the stimulation of transcription of its target genes.

The protein resides in the nucleus. Functionally, involved in transcriptional regulation. Represses the transcription of a number of genes including gastrin, stromelysin and enolase. Binds to the G-rich box in the enhancer region of these genes. This is Zinc finger protein 148 (ZNF148) from Bos taurus (Bovine).